We begin with the raw amino-acid sequence, 597 residues long: Sodium/mannose cotransporter SLC5A10 (597 aa).

Residues 1–16 (MAVDNSTSDAHTPGRQ) lie on the Extracellular side of the membrane. Asn-5 carries N-linked (GlcNAc...) asparagine glycosylation. Residues 17-37 (LTVVDIAIIAVYFALNVAVGI) form a helical membrane-spanning segment. The Cytoplasmic portion of the chain corresponds to 38–73 (WSSCRASRNTVRGYFLAGRDMTWWPIGASLFASSEG). The helical transmembrane segment at 74 to 94 (SGLFIGLAGSGAAGGLAVAGF) threads the bilayer. The Extracellular portion of the chain corresponds to 95–100 (EWNATY). An N-linked (GlcNAc...) asparagine glycan is attached at Asn-97. The helical transmembrane segment at 101 to 121 (VLLALAWVFVPIYLSSEIVTM) threads the bilayer. Residues 122–139 (PEYMQKRYGGQRIRMYLS) lie on the Cytoplasmic side of the membrane. Residues 140-162 (VLSLLLSVFTKISIDLYAGALFV) traverse the membrane as a helical segment. Residues 163 to 174 (HICLGWNFYLST) lie on the Extracellular side of the membrane. A helical membrane pass occupies residues 175-195 (VIMLAITALYTIAGGLTAVIY). The Cytoplasmic segment spans residues 196–201 (TDALQT). A helical membrane pass occupies residues 202-222 (LVMVAGAVILTIKAFEQIGGY). Over 223–265 (EQLAEAYAQAVPSRTISNTTCHVPRADAMHMFRDPYTADLPWT) the chain is Extracellular. Residues 266–286 (GMTFGLTIMAAWYWCTDQVIV) traverse the membrane as a helical segment. The Cytoplasmic portion of the chain corresponds to 287 to 301 (QRSLSARDLNHAKGG). The helical transmembrane segment at 302 to 322 (SILASYLKMLPMGLMVMPGMI) threads the bilayer. The Extracellular segment spans residues 323–367 (SRVLFPDDVGCVVPAECLRACGAEIGCSNIAYPKLVMELMPTGLR). The helical transmembrane segment at 368-388 (GLMVAVMMAALMSSLTSIFNS) threads the bilayer. The Cytoplasmic segment spans residues 389–410 (SSTLFTMDIWRRLRPRAGEREL). Residues 411 to 431 (LLVGRLVIVVLVGVSVAWIPV) traverse the membrane as a helical segment. The Extracellular portion of the chain corresponds to 432–444 (LQGSNGGQLFIYM). Residues 445–465 (QSVTSSLAPPVTAVFVLGIFW) traverse the membrane as a helical segment. Topologically, residues 466 to 472 (RRANEQG) are cytoplasmic. Residues 473-493 (AFWGLMAGLAVGATRLVLEFL) traverse the membrane as a helical segment. Residues 494–514 (HPAPPCGHPDTRPPILHGVHY) are Extracellular-facing. The chain crosses the membrane as a helical span at residues 515–535 (LHFAVALFLLSGAVVVAGSLL). The Cytoplasmic portion of the chain corresponds to 536–576 (TPHPQGVQIQSLTWWTLAQDLPLGVKTGDGRASQRHAFWAR). Residues 577-597 (VCGVNAILLMCVNIFFYTYFA) form a helical membrane-spanning segment.

This sequence belongs to the sodium:solute symporter (SSF) (TC 2.A.21) family. In terms of tissue distribution, predominantyl expressed in kidney. Also detected at very low levels in testes, skeletal muscle, and spleen.

Its subcellular location is the apical cell membrane. It carries out the reaction D-mannose(out) + Na(+)(out) = D-mannose(in) + Na(+)(in). The catalysed reaction is D-fructopyranose(out) + Na(+)(out) = D-fructopyranose(in) + Na(+)(in). Its function is as follows. Electrogenic Na+-coupled sugar symporter that actively transports D-mannose or D-fructose at the plasma membrane, with a Na+ to sugar coupling ratio of 1:1. Transporter activity is driven by a transmembrane Na+ electrochemical gradient set by the Na+/K+ pump. Exclusively recognizes sugar substrates having a pyranose ring with an axial hydroxyl group on carbon 2. Has likely evolved to enable renal reabsorption of D-mannose, an important constituent of oligosaccharide chains of glycoproteins. Contributes to dietary D-fructose reabsorption from glomerular filtrate across the brush border of the kidney. The polypeptide is Sodium/mannose cotransporter SLC5A10 (SLC5A10) (Bos taurus (Bovine)).